The following is a 108-amino-acid chain: ER membrane protein complex subunit 6 (108 aa).

Helical transmembrane passes span 21–41 (VVSF…GILG), 45–65 (YEGL…LFAL), and 86–106 (ILDG…LVYV).

The protein belongs to the EMC6 family.

Its subcellular location is the endoplasmic reticulum membrane. The protein is ER membrane protein complex subunit 6 of Schizosaccharomyces pombe (strain 972 / ATCC 24843) (Fission yeast).